Reading from the N-terminus, the 345-residue chain is 3-isopropylmalate dehydrogenase (345 aa).

Position 74–87 (74–87) interacts with NAD(+); that stretch reads GPKWDGLPRKIRPE. Substrate-binding residues include Arg94, Arg104, Arg132, and Asp217. Residues Asp217, Asp241, and Asp245 each contribute to the Mg(2+) site. Residue 274–286 coordinates NAD(+); that stretch reads GSAPDIAGKGIAN.

It belongs to the isocitrate and isopropylmalate dehydrogenases family. LeuB type 1 subfamily. In terms of assembly, homodimer. Requires Mg(2+) as cofactor. It depends on Mn(2+) as a cofactor.

The protein resides in the cytoplasm. The catalysed reaction is (2R,3S)-3-isopropylmalate + NAD(+) = 4-methyl-2-oxopentanoate + CO2 + NADH. It functions in the pathway amino-acid biosynthesis; L-leucine biosynthesis; L-leucine from 3-methyl-2-oxobutanoate: step 3/4. In terms of biological role, catalyzes the oxidation of 3-carboxy-2-hydroxy-4-methylpentanoate (3-isopropylmalate) to 3-carboxy-4-methyl-2-oxopentanoate. The product decarboxylates to 4-methyl-2 oxopentanoate. The protein is 3-isopropylmalate dehydrogenase (leuB) of Thermus thermophilus (strain ATCC 27634 / DSM 579 / HB8).